The primary structure comprises 324 residues: Biotin synthase (324 aa).

The Radical SAM core domain maps to phenylalanine 43–arginine 273. Residues cysteine 61, cysteine 65, and cysteine 68 each contribute to the [4Fe-4S] cluster site. [2Fe-2S] cluster contacts are provided by serine 105, cysteine 138, cysteine 198, and arginine 268.

Belongs to the radical SAM superfamily. Biotin synthase family. In terms of assembly, homodimer. [4Fe-4S] cluster is required as a cofactor. It depends on [2Fe-2S] cluster as a cofactor.

It carries out the reaction (4R,5S)-dethiobiotin + (sulfur carrier)-SH + 2 reduced [2Fe-2S]-[ferredoxin] + 2 S-adenosyl-L-methionine = (sulfur carrier)-H + biotin + 2 5'-deoxyadenosine + 2 L-methionine + 2 oxidized [2Fe-2S]-[ferredoxin]. It functions in the pathway cofactor biosynthesis; biotin biosynthesis; biotin from 7,8-diaminononanoate: step 2/2. Catalyzes the conversion of dethiobiotin (DTB) to biotin by the insertion of a sulfur atom into dethiobiotin via a radical-based mechanism. The sequence is that of Biotin synthase from Campylobacter hominis (strain ATCC BAA-381 / DSM 21671 / CCUG 45161 / LMG 19568 / NCTC 13146 / CH001A).